A 546-amino-acid polypeptide reads, in one-letter code: Probable protein kinase UbiB (546 aa).

Positions D124 to F502 constitute a Protein kinase domain. Residues L130–V138 and K153 each bind ATP. The active-site Proton acceptor is D288. A run of 2 helical transmembrane segments spans residues Y501–P521 and E522–W542.

The protein belongs to the ABC1 family. UbiB subfamily.

It localises to the cell inner membrane. The protein operates within cofactor biosynthesis; ubiquinone biosynthesis [regulation]. Functionally, is probably a protein kinase regulator of UbiI activity which is involved in aerobic coenzyme Q (ubiquinone) biosynthesis. The polypeptide is Probable protein kinase UbiB (Shigella sonnei (strain Ss046)).